The sequence spans 750 residues: Photosystem I P700 chlorophyll a apoprotein A1 (750 aa).

8 helical membrane-spanning segments follow: residues 70 to 93, 156 to 179, 195 to 219, 291 to 309, 346 to 369, 385 to 411, 433 to 455, and 531 to 549; these read VFSAHFGQLSIIFLWLSGMYFHGA, LYCTAIGALVFAALMLFAGWFHYH, LNHHLAGLLGLGSLSWAGHQVHVSL, IAHHHLAIAILFLLAGHMY, WHAQLSLNLAMLGSLTIVVAHHMY, LSLFTHHMWIGGFLIVGAAAHAAIFMV, AIISHLNWVCIFLGFHSFGLYIH, and FLVHHIHAFTIHVTVLILL. [4Fe-4S] cluster-binding residues include Cys-573 and Cys-582. The next 2 membrane-spanning stretches (helical) occupy residues 589–610 and 664–686; these read HVFLGLFWMYNAISVVIFHFSW and LSAYGLFFLGAHFVWAFSLMFLF. His-675 serves as a coordination point for chlorophyll a'. Chlorophyll a contacts are provided by Met-683 and Tyr-691. Trp-692 is a phylloquinone binding site. Residues 724-744 traverse the membrane as a helical segment; it reads AVGVTHYLLGGIATTWAFFLA.

Belongs to the PsaA/PsaB family. In terms of assembly, the PsaA/B heterodimer binds the P700 chlorophyll special pair and subsequent electron acceptors. PSI consists of a core antenna complex that captures photons, and an electron transfer chain that converts photonic excitation into a charge separation. The eukaryotic PSI reaction center is composed of at least 11 subunits. P700 is a chlorophyll a/chlorophyll a' dimer, A0 is one or more chlorophyll a, A1 is one or both phylloquinones and FX is a shared 4Fe-4S iron-sulfur center. serves as cofactor.

Its subcellular location is the plastid. It localises to the chloroplast thylakoid membrane. The catalysed reaction is reduced [plastocyanin] + hnu + oxidized [2Fe-2S]-[ferredoxin] = oxidized [plastocyanin] + reduced [2Fe-2S]-[ferredoxin]. PsaA and PsaB bind P700, the primary electron donor of photosystem I (PSI), as well as the electron acceptors A0, A1 and FX. PSI is a plastocyanin-ferredoxin oxidoreductase, converting photonic excitation into a charge separation, which transfers an electron from the donor P700 chlorophyll pair to the spectroscopically characterized acceptors A0, A1, FX, FA and FB in turn. Oxidized P700 is reduced on the lumenal side of the thylakoid membrane by plastocyanin. The polypeptide is Photosystem I P700 chlorophyll a apoprotein A1 (Arabis hirsuta (Hairy rock-cress)).